The chain runs to 124 residues: Transcription initiation factor TFIID subunit 13 (124 aa).

Residues 1–16 (MADEEEDPTFEEENEE) show a composition bias toward acidic residues. A disordered region spans residues 1–28 (MADEEEDPTFEEENEEIGGGAEGGQGKR). Residues 32-74 (FSKELRCMMYGFGDDQNPYTESVDILEDLVIEFITEMTHKAMS) form the Histone-fold domain.

This sequence belongs to the TAF13 family. Component of the TFIID basal transcription factor complex, composed of TATA-box-binding protein TBP, and a number of TBP-associated factors (TAFs), including TAF1, TAF2, TAF3, TAF4, TAF5, TAF6, TAF7, TAF8, TAF9, TAF10, TAF11, TAF12 and TAF13. Interacts with TBP, and more strongly with TAF10 and TAF11.

The protein localises to the nucleus. In terms of biological role, the TFIID basal transcription factor complex plays a major role in the initiation of RNA polymerase II (Pol II)-dependent transcription. TFIID recognizes and binds promoters via its subunit TBP, a TATA-box-binding protein, and promotes assembly of the pre-initiation complex (PIC). The TFIID complex consists of TBP and TBP-associated factors (TAFs), including TAF1, TAF2, TAF3, TAF4, TAF5, TAF6, TAF7, TAF8, TAF9, TAF10, TAF11, TAF12 and TAF13. TAF13, together with TAF11 and TBP, play key roles during promoter binding by the TFIID and TFIIA transcription factor complexes. This chain is Transcription initiation factor TFIID subunit 13, found in Bos taurus (Bovine).